Reading from the N-terminus, the 474-residue chain is Synaptotagmin-17 (474 aa).

The tract at residues 54–112 (PAQTPPWLVSNRSEDKEGDSDNTTSEPPATPQDTSPDRRRSSSDTSRSTYSLTRRISSL) is disordered. Positions 96-112 (SDTSRSTYSLTRRISSL) are enriched in low complexity. C2 domains lie at 184–310 (QLGM…HWWK) and 321–455 (ELGE…EQWH).

The protein belongs to the synaptotagmin family.

The protein resides in the membrane. In terms of biological role, may play a role in dendrite formation by melanocytes. This is Synaptotagmin-17 (syt17) from Xenopus tropicalis (Western clawed frog).